Here is a 585-residue protein sequence, read N- to C-terminus: Zinc finger protein 614 (585 aa).

The region spanning 8–79 (LTLEDVAVEF…DAKIQNKNCP (72 aa)) is the KRAB domain. Residues 205-227 (HACIECEQTFLRKSQLIYHENIC) form a C2H2-type 1; atypical zinc finger. The C2H2-type 2; degenerate zinc-finger motif lies at 257-281 (KICIPNEYRKGSTVKSSLITHQQTH). 10 C2H2-type zinc fingers span residues 287–309 (YMCS…QRTH), 315–337 (YVCK…QRTH), 343–365 (YICS…QRTH), 371–393 (YMCS…QRSH), 399–421 (YICS…QRTH), 427–449 (YICN…QRTH), 455–477 (YECN…ERCH), 483–505 (FVCT…QRIH), 511–533 (YECN…QRTH), and 539–561 (YGCS…KKMH).

This sequence belongs to the krueppel C2H2-type zinc-finger protein family.

Its subcellular location is the nucleus. In terms of biological role, may be involved in transcriptional regulation. This Homo sapiens (Human) protein is Zinc finger protein 614 (ZNF614).